A 235-amino-acid chain; its full sequence is 7-carboxy-7-deazaguanine synthase (235 aa).

Substrate is bound by residues 27 to 29 (LQG) and Arg-42. The Radical SAM core domain maps to 33 to 235 (FSGQPSVFVR…VQVHKILKIA (203 aa)). [4Fe-4S] cluster contacts are provided by Cys-46, Cys-50, and Cys-53. Residue Thr-55 coordinates Mg(2+). Thr-87 provides a ligand contact to substrate. Residues Gly-89 and 133 to 135 (SPK) each bind S-adenosyl-L-methionine.

This sequence belongs to the radical SAM superfamily. 7-carboxy-7-deazaguanine synthase family. As to quaternary structure, homodimer. It depends on [4Fe-4S] cluster as a cofactor. S-adenosyl-L-methionine serves as cofactor. Requires Mg(2+) as cofactor.

The catalysed reaction is 6-carboxy-5,6,7,8-tetrahydropterin + H(+) = 7-carboxy-7-deazaguanine + NH4(+). It participates in purine metabolism; 7-cyano-7-deazaguanine biosynthesis. Catalyzes the complex heterocyclic radical-mediated conversion of 6-carboxy-5,6,7,8-tetrahydropterin (CPH4) to 7-carboxy-7-deazaguanine (CDG), a step common to the biosynthetic pathways of all 7-deazapurine-containing compounds. In Rhodospirillum rubrum (strain ATCC 11170 / ATH 1.1.1 / DSM 467 / LMG 4362 / NCIMB 8255 / S1), this protein is 7-carboxy-7-deazaguanine synthase.